The following is a 283-amino-acid chain: Non-selective voltage-gated ion channel VDAC3 (283 aa).

Cys-2 bears the N-acetylcysteine mark. Thr-4 is subject to Phosphothreonine. N6-acetyllysine is present on residues Lys-12, Lys-15, and Lys-20. 2 beta stranded membrane-spanning segments follow: residues Met-26 to Ser-35 and Val-39 to Ala-47. Glycyl lysine isopeptide (Lys-Gly) (interchain with G-Cter in ubiquitin) cross-links involve residues Lys-53 and Lys-61. 3 beta stranded membrane-spanning segments follow: residues Ala-54 to Val-64, Leu-69 to Asn-76, and Thr-80 to Asn-89. Lys-90 is modified (N6-acetyllysine). The chain crosses the membrane as a beta stranded span at residues Leu-95–Val-104. Glycyl lysine isopeptide (Lys-Gly) (interchain with G-Cter in ubiquitin) cross-links involve residues Lys-109 and Lys-110. Beta stranded transmembrane passes span Ser-111 to Arg-120, Phe-123 to Asp-130, Thr-137 to Ala-145, Leu-150 to Asp-158, Lys-163 to Ala-175, Phe-178 to Asn-185, Glu-189 to Val-198, Ile-202 to Thr-211, Arg-218 to Leu-227, and Thr-231 to Asn-238. A Glycyl lysine isopeptide (Lys-Gly) (interchain with G-Cter in ubiquitin) cross-link involves residue Lys-163. Ser-241 carries the post-translational modification Phosphoserine. Residues Leu-242–Gly-244 and Ser-260–Asp-264 each bind NAD(+). Beta stranded transmembrane passes span Leu-242–Leu-251 and Gly-254–Ile-263. Lys-266 is subject to N6-acetyllysine; alternate. Residue Lys-266 forms a Glycyl lysine isopeptide (Lys-Gly) (interchain with G-Cter in ubiquitin); alternate linkage. The beta stranded transmembrane segment at His-273–Glu-282 threads the bilayer. A Glycyl lysine isopeptide (Lys-Gly) (interchain with G-Cter in ubiquitin) cross-link involves residue Lys-274.

It belongs to the eukaryotic mitochondrial porin family. Interacts with ARMC12 in a TBC1D21-dependent manner. Interacts with MISFA. Post-translationally, ubiquitinated by PRKN during mitophagy, leading to its degradation and enhancement of mitophagy. Deubiquitinated by USP30. Expressed in erythrocytes (at protein level). Widely expressed. Highest in testis.

It localises to the mitochondrion outer membrane. The protein resides in the membrane. It carries out the reaction chloride(in) = chloride(out). The enzyme catalyses K(+)(in) = K(+)(out). Functionally, non-selective voltage-gated ion channel that mediates the transport of anions and cations through the mitochondrion outer membrane and plasma membrane. Forms a high-conducting channel with a stable open state and a voltage-induced closure with a mild preference for anions over cations. Involved in male fertility and sperm mitochondrial sheath formation. This is Non-selective voltage-gated ion channel VDAC3 from Homo sapiens (Human).